The primary structure comprises 441 residues: C-terminal-binding protein 1 (441 aa).

The tract at residues 1 to 70 is interaction with GLIS2 1; that stretch reads MGSSHLLNKG…EIHEKVLNEA (70 aa). NAD(+) contacts are provided by residues Ser-100, 180-185, Asp-204, 237-243, 264-266, and Asp-290; these read IGLGRV, CGLNEHN, and TAR. The active site involves Arg-266. Residues 288 to 360 are interaction with GLIS2 2; it reads ALDVHESEPF…VNKDHLTAAT (73 aa). Glu-295 is an active-site residue. Phosphoserine is present on Ser-300. His-315 functions as the Proton donor in the catalytic mechanism. 315-318 contributes to the NAD(+) binding site; it reads HAAW. Residues 409–441 form a disordered region; it reads SHGLPPVAHPPHAPSPGQTVKPEADRDHTSDQL. Ser-423 carries the phosphoserine modification. Residue Lys-429 forms a Glycyl lysine isopeptide (Lys-Gly) (interchain with G-Cter in SUMO) linkage. Residues 430–441 are compositionally biased toward basic and acidic residues; it reads PEADRDHTSDQL.

Belongs to the D-isomer specific 2-hydroxyacid dehydrogenase family. In terms of assembly, homo- or heterodimer. Heterodimer with CTBP2. Interacts with ELK3 (via its PXDLS motif). Interacts with RBBP8 (via its PXDLS motif). Interacts with PNN, MECOM and ZFHX1B. Interacts with ZNF366 (via PXDLS motif). Interaction with SATB1 (non-acetylated form); the interaction stabilizes its attachment to DNA and promotes transcription repression. Interacts with PRDM16; the interaction represses white adipose tissue (WAT)-specific genes expression. Interacts with GLIS2, HIPK2, FOXP1, FOXP2, HDAC4, HDAC5, HDAC9, NRIP1, WIZ and ZNF217. Interacts with BCL6; the interaction is required for BCL6 transcriptional autoinhibition and inhibition of some BCL6 target genes. Interacts with IKZF4. Interacts with MCRIP1 (unphosphorylated form, via the PXDLS motif); competitively inhibiting CTBP-ZEB1 interaction. Interacts with Bassoon/BSN; this interaction targets and anchors CTBP1 to presynapses. Interacts with SIMC1. NAD(+) is required as a cofactor. Post-translationally, ADP-ribosylated; when cells are exposed to brefeldin A. In terms of processing, the level of phosphorylation appears to be regulated during the cell cycle. Phosphorylation by HIPK2 on Ser-423 induces proteasomal degradation. Sumoylation on Lys-429 is promoted by the E3 SUMO-protein ligase CBX4. Expressed in a wide range of adult tissues.

It localises to the cytoplasm. The protein resides in the nucleus. Functionally, corepressor targeting diverse transcription regulators such as GLIS2 or BCL6. Has dehydrogenase activity. Involved in controlling the equilibrium between tubular and stacked structures in the Golgi complex. Functions in brown adipose tissue (BAT) differentiation. This is C-terminal-binding protein 1 (Ctbp1) from Mus musculus (Mouse).